The primary structure comprises 459 residues: Trigger factor (459 aa).

Positions 161–246 (GDKVVIDFQG…IKKIMEGKLP (86 aa)) constitute a PPIase FKBP-type domain.

Belongs to the FKBP-type PPIase family. Tig subfamily.

The protein localises to the cytoplasm. The catalysed reaction is [protein]-peptidylproline (omega=180) = [protein]-peptidylproline (omega=0). Its function is as follows. Involved in protein export. Acts as a chaperone by maintaining the newly synthesized protein in an open conformation. Functions as a peptidyl-prolyl cis-trans isomerase. The chain is Trigger factor from Legionella pneumophila (strain Corby).